The sequence spans 345 residues: MQAKINSFFKPSSSSSIAASVTTDTDDGLAVWENNRNAIVNTYQRRSAITERSEVLKGCIEKTLKKGSSSVPKNHKKKRNYTQFHLELGQSDFLLRHCAECGAKYAPGDELDEKNHQSFHKDYMYGLPFKGWQNEKAFTSPLFIKNRIVMVSENDSPAHRNKVQEVVKMMEVELGEDWILHQHCKVYLFISSQRISGCLVAEPIKEAFKLIASPDDERQLQKESSSSPSTSIQFGNIVLQREVSKRCRTSDDRLDNGVIVCEEEAKPAVCGIRAIWVSPSNRRKGIATWLLDTTRESFCNNGCMLEKSQLAFSQPSSIGRSFGSKYFGTCSFLLYKAQLIDTHFS.

A CCHH-type zinc finger spans residues 96-120 (RHCAECGAKYAPGDELDEKNHQSFH).

Belongs to the acetyltransferase family. ECO subfamily. Post-translationally, autoacetylated. In terms of tissue distribution, expressed in roots, stems, leaves, young seedlings and flower buds. Detected in the embryo, but not in the endosperm.

It localises to the nucleus. It is found in the cytoplasm. Its function is as follows. Acetyltransferase required for the establishment of sister chromatid cohesion. Involved in preservation of genome integrity and meiosis. Required for DNA repair and for the regulation of chromosome segregation during mitotic cell division. Knock-down mutants are extremely dwarf. Regulator of sister chromatid cohesion in meiosis which negatively regulates cohesin association with chromatin, acting as an antagonist of WAPL1 and WAPL2. The sequence is that of Protein CHROMOSOME TRANSMISSION FIDELITY 7 from Arabidopsis thaliana (Mouse-ear cress).